We begin with the raw amino-acid sequence, 307 residues long: uncharacterized protein (307 aa).

Residues histidine 254–glutamate 278 are disordered. Basic residues predominate over residues serine 255–asparagine 272.

The protein to yeast YOR062c.

This is an uncharacterized protein from Saccharomyces cerevisiae (strain ATCC 204508 / S288c) (Baker's yeast).